The chain runs to 251 residues: Aliphatic sulfonates import ATP-binding protein SsuB (251 aa).

In terms of domain architecture, ABC transporter spans 3–231 (VSINEVSKYF…PRNKTSQSFQ (229 aa)). An ATP-binding site is contributed by 39–46 (GPSGCGKS).

The protein belongs to the ABC transporter superfamily. Aliphatic sulfonates importer (TC 3.A.1.17.2) family. The complex is composed of two ATP-binding proteins (SsuB), two transmembrane proteins (SsuC) and a solute-binding protein (SsuA).

It is found in the cell membrane. It catalyses the reaction ATP + H2O + aliphatic sulfonate-[sulfonate-binding protein]Side 1 = ADP + phosphate + aliphatic sulfonateSide 2 + [sulfonate-binding protein]Side 1.. Part of the ABC transporter complex SsuABC involved in aliphatic sulfonates import. Responsible for energy coupling to the transport system. This Bacillus anthracis protein is Aliphatic sulfonates import ATP-binding protein SsuB.